Here is a 257-residue protein sequence, read N- to C-terminus: UPF0246 protein Ssed_1188 (257 aa).

Belongs to the UPF0246 family.

This is UPF0246 protein Ssed_1188 from Shewanella sediminis (strain HAW-EB3).